The sequence spans 476 residues: Bifunctional protein HldE (476 aa).

Residues 1-318 (MKPILPDYSQ…AEAIHGSQDT (318 aa)) form a ribokinase region. 195–198 (NMAE) is an ATP binding site. D264 is an active-site residue. The cytidylyltransferase stretch occupies residues 344 to 476 (MTNGCFDILH…IIKAIKGGRG (133 aa)).

This sequence in the N-terminal section; belongs to the carbohydrate kinase PfkB family. The protein in the C-terminal section; belongs to the cytidylyltransferase family. Homodimer.

It catalyses the reaction D-glycero-beta-D-manno-heptose 7-phosphate + ATP = D-glycero-beta-D-manno-heptose 1,7-bisphosphate + ADP + H(+). It carries out the reaction D-glycero-beta-D-manno-heptose 1-phosphate + ATP + H(+) = ADP-D-glycero-beta-D-manno-heptose + diphosphate. It participates in nucleotide-sugar biosynthesis; ADP-L-glycero-beta-D-manno-heptose biosynthesis; ADP-L-glycero-beta-D-manno-heptose from D-glycero-beta-D-manno-heptose 7-phosphate: step 1/4. Its pathway is nucleotide-sugar biosynthesis; ADP-L-glycero-beta-D-manno-heptose biosynthesis; ADP-L-glycero-beta-D-manno-heptose from D-glycero-beta-D-manno-heptose 7-phosphate: step 3/4. Functionally, catalyzes the phosphorylation of D-glycero-D-manno-heptose 7-phosphate at the C-1 position to selectively form D-glycero-beta-D-manno-heptose-1,7-bisphosphate. Its function is as follows. Catalyzes the ADP transfer from ATP to D-glycero-beta-D-manno-heptose 1-phosphate, yielding ADP-D-glycero-beta-D-manno-heptose. The chain is Bifunctional protein HldE from Vibrio atlanticus (strain LGP32) (Vibrio splendidus (strain Mel32)).